We begin with the raw amino-acid sequence, 508 residues long: Metalloprotease TIKI1 (508 aa).

The first 23 residues, 1–23, serve as a signal peptide directing secretion; the sequence is MVIIWNIFLPAFLLVLAKASLRS. Topologically, residues 24 to 485 are extracellular; it reads SRDSANCKLN…KYIKAAQSVS (462 aa). Asn-219, Asn-228, Asn-277, and Asn-335 each carry an N-linked (GlcNAc...) asparagine glycan. Residues 486–506 form a helical membrane-spanning segment; it reads FSLSIPSAFLLLAWCFQQVAV. Residues 507-508 lie on the Cytoplasmic side of the membrane; the sequence is LQ.

The protein belongs to the TIKI family. Mn(2+) is required as a cofactor. It depends on Co(2+) as a cofactor. As to expression, zygotically expressed in the Spemann-Mangold organizer, in particular in the head Spemann-Mangold organizer region responsible for anterior patterning.

It is found in the cell membrane. In terms of biological role, metalloprotease that acts as a negative regulator of the Wnt signaling pathway: expressed in the Spemann-Mangold organizer and is required for anterior-neural patterning in head formation in embryos. Acts by mediating the cleavage of the N-terminal residues of a subset of Wnt proteins. Following cleavage, Wnt proteins become oxidized and form large disulfide-bond oligomers, leading to their inactivation. Able to cleave wnt8. The polypeptide is Metalloprotease TIKI1 (trabd2a) (Xenopus tropicalis (Western clawed frog)).